A 293-amino-acid chain; its full sequence is Ribosomal protein L11 methyltransferase (293 aa).

Residues Thr145, Gly166, Asp188, and Asn230 each contribute to the S-adenosyl-L-methionine site.

It belongs to the methyltransferase superfamily. PrmA family.

It is found in the cytoplasm. The catalysed reaction is L-lysyl-[protein] + 3 S-adenosyl-L-methionine = N(6),N(6),N(6)-trimethyl-L-lysyl-[protein] + 3 S-adenosyl-L-homocysteine + 3 H(+). Methylates ribosomal protein L11. The chain is Ribosomal protein L11 methyltransferase from Klebsiella pneumoniae subsp. pneumoniae (strain ATCC 700721 / MGH 78578).